Reading from the N-terminus, the 165-residue chain is E3 ubiquitin ligase complex SCF subunit sconC (165 aa).

Residues 106 to 165 form an interaction with the F-box domain of F-box proteins region; the sequence is ILAANYLDIKALLDVGCKTVANMIKGKSPEEIRKTFNIQNDFTPEEEDQIRRENEWAEDR.

This sequence belongs to the SKP1 family. As to quaternary structure, component of the SCF (SKP1-CUL1-F-box protein) E3 ubiquitin ligase complexes.

Its pathway is protein modification; protein ubiquitination. In terms of biological role, essential component of the SCF (SKP1-CUL1-F-box protein) E3 ubiquitin ligase complexes, which mediate the ubiquitination and subsequent proteasomal degradation of target proteins. Controls sulfur metabolite repression, probably by mediating the inactivation or degradation of the metR transcription factor. This chain is E3 ubiquitin ligase complex SCF subunit sconC (sconC), found in Arthroderma otae (Microsporum canis).